The primary structure comprises 344 residues: Arginine N-succinyltransferase (344 aa).

L125 serves as a coordination point for succinyl-CoA. Residue H229 is the Proton donor of the active site.

It belongs to the arginine N-succinyltransferase family.

It carries out the reaction succinyl-CoA + L-arginine = N(2)-succinyl-L-arginine + CoA + H(+). It functions in the pathway amino-acid degradation; L-arginine degradation via AST pathway; L-glutamate and succinate from L-arginine: step 1/5. Its function is as follows. Catalyzes the transfer of succinyl-CoA to arginine to produce N(2)-succinylarginine. The sequence is that of Arginine N-succinyltransferase from Enterobacter sp. (strain 638).